The chain runs to 563 residues: Efflux pump notK (563 aa).

The tract at residues methionine 1 to glutamate 32 is disordered. 14 helical membrane-spanning segments follow: residues isoleucine 48 to glycine 68, aspartate 78 to glycine 98, leucine 108 to proline 128, alanine 138 to valine 158, alanine 165 to leucine 185, tryptophan 197 to phenylalanine 217, leucine 239 to glycine 259, valine 270 to isoleucine 290, leucine 312 to phenylalanine 332, valine 345 to isoleucine 365, tyrosine 374 to isoleucine 394, valine 406 to phenylalanine 426, valine 438 to phenylalanine 458, and valine 509 to phenylalanine 529. The tract at residues glycine 538–valine 563 is disordered. The segment covering glutamate 547–valine 563 has biased composition (basic and acidic residues).

Belongs to the major facilitator superfamily. TCR/Tet family.

It localises to the cell membrane. Efflux pump; part of the gene cluster that mediates the biosynthesis of notoamide, a fungal indole alkaloid that belongs to a family of natural products containing a characteristic bicyclo[2.2.2]diazaoctane core. The polypeptide is Efflux pump notK (Aspergillus sp. (strain MF297-2)).